The chain runs to 86 residues: Large ribosomal subunit protein bL27 (86 aa).

The protein belongs to the bacterial ribosomal protein bL27 family.

This Flavobacterium johnsoniae (strain ATCC 17061 / DSM 2064 / JCM 8514 / BCRC 14874 / CCUG 350202 / NBRC 14942 / NCIMB 11054 / UW101) (Cytophaga johnsonae) protein is Large ribosomal subunit protein bL27.